We begin with the raw amino-acid sequence, 580 residues long: MSSCRYNGGVMRPLSNLSSSRRNLHEMDSEAQPLQPPASVVGGGGGASSPSAAAAASSSAPEIVVSKPEHNNSNNLALYGTGGGGSTGGGGGGGGGGGGSGHGSSSGTKSSKKKNQNIGYKLGHRRALFEKRKRLSDYALIFGMFGIVVMVIETELSWGAYDKASLYSLALKCLISLSTIILLGLIIVYHAREIQLFMVDNGADDWRIAMTYERIFFICLEILVCAIHPIPGNYTFTWTARLAFSYAPSTTTADVDIILSIPMFLRLYLIARVMLLHSKLFTDASSRSIGALNKINFNTRFVMKTLMTICPGTVLLVFSISLWIIAAWTVRACERYHDQQDVTSNFLGAMWLISITFLSIGYGDMVPNTYCGKGVCLLTGIMGAGCTALVVAVVARKLELTKAEKHVHNFMMDTQLTKRVKNAAANVLRETWLIYKNTKLVKKIDHAKVRKHQRKFLQAIHQLRSVKMEQRKLNDQANTLVDLAKTQNIMYDMISDLNERSEDFEKRIVTLETKLETLIGSIHALPGLISQTIRQQQRDFIETQMENYDKHVTYNAERSRSSSRRRRSSSTAPPTSSESS.

Disordered regions lie at residues 1-68 (MSSC…VSKP) and 88-116 (GGGG…KKNQ). Residues 48-61 (SSPSAAAAASSSAP) show a composition bias toward low complexity. The segment covering 88–104 (GGGGGGGGGGGGSGHGS) has biased composition (gly residues). A helical membrane pass occupies residues 140 to 160 (LIFGMFGIVVMVIETELSWGA). At Tyr-161 the chain carries Phosphotyrosine. Residues 169-189 (LALKCLISLSTIILLGLIIVY) traverse the membrane as a helical segment. Residues 215–235 (IFFICLEILVCAIHPIPGNYT) traverse the membrane as a helical segment. The helical transmembrane segment at 257 to 277 (IILSIPMFLRLYLIARVMLLH) threads the bilayer. Residues 306–326 (LMTICPGTVLLVFSISLWIIA) traverse the membrane as a helical segment. The pore-forming intramembrane region spans 346 to 366 (FLGAMWLISITFLSIGYGDMV). A helical membrane pass occupies residues 375–395 (VCLLTGIMGAGCTALVVAVVA). Positions 413-489 (DTQLTKRVKN…LVDLAKTQNI (77 aa)) are calmodulin-binding. Residues 551-560 (HVTYNAERSR) show a composition bias toward basic and acidic residues. The segment at 551–580 (HVTYNAERSRSSSRRRRSSSTAPPTSSESS) is disordered. Over residues 569-580 (SSTAPPTSSESS) the composition is skewed to low complexity.

This sequence belongs to the potassium channel KCNN family. KCa2.2/KCNN2 subfamily. Homodimer. Heteromultimer with KCNN1 and KCNN3. The complex is composed of 4 channel subunits each of which binds to a calmodulin subunit which regulates the channel activity through calcium-binding. Interacts (via N-terminal domain) with MPP2. In terms of tissue distribution, brain.

It localises to the membrane. The protein resides in the cytoplasm. It is found in the myofibril. The protein localises to the sarcomere. Its subcellular location is the z line. It carries out the reaction K(+)(in) = K(+)(out). Inhibited by bee venom neurotoxin apamin. Inhibited by UCL 1684 and tetraethylammonium (TEA). Small conductance calcium-activated potassium channel that mediates the voltage-independent transmembrane transfer of potassium across the cell membrane through a constitutive interaction with calmodulin which binds the intracellular calcium allowing its opening. The current is characterized by a voltage-independent activation, an intracellular calcium concentration increase-dependent activation and a single-channel conductance of about 3 picosiemens. Also presents an inwardly rectifying current, thus reducing its already small outward conductance of potassium ions, which is particularly the case when the membrane potential displays positive values, above + 20 mV. The inward rectification could be due to a blockade of the outward current by intracellular divalent cations such as calcium and magnesium and could also be due to an intrinsic property of the channel pore, independent of intracellular divalent ions. There are three positively charged amino acids in the S6 transmembrane domain, close to the pore, that collectively control the conductance and rectification through an electrostatic mechanism. Additionally, electrostatic contributions from these residues also play an important role in determining the intrinsic open probability of the channel in the absence of calcium, affecting the apparent calcium affinity for activation. Forms an heteromeric complex with calmodulin, which is constitutively associated in a calcium-independent manner. Channel opening is triggered when calcium binds the calmodulin resulting in a rotary movement leading to the formation of the dimeric complex to open the gate. Plays a role in the repolarization phase of cardiac action potential. The polypeptide is Small conductance calcium-activated potassium channel protein 2 (Rattus norvegicus (Rat)).